Here is a 379-residue protein sequence, read N- to C-terminus: GDSL esterase/lipase At3g05180 (379 aa).

A signal peptide spans 1–27; it reads METLFHTLLRLLLFVAISHTLSPLAGS. Catalysis depends on S43, which acts as the Nucleophile. Residues N294 and N330 are each glycosylated (N-linked (GlcNAc...) asparagine). Residues D349 and H352 contribute to the active site.

The protein belongs to the 'GDSL' lipolytic enzyme family.

It localises to the secreted. In Arabidopsis thaliana (Mouse-ear cress), this protein is GDSL esterase/lipase At3g05180.